Here is a 2023-residue protein sequence, read N- to C-terminus: Protein Daple (2023 aa).

The region spanning 11-131 is the Calponin-homology (CH) domain; sequence NFMDSPLVVW…RMLLLILGCA (121 aa). 3 coiled-coil regions span residues 250 to 415, 458 to 1064, and 1105 to 1419; these read RQHL…LLEE, NESA…VEKN, and LKQI…QYKF. Positions 1013-1035 are disordered; the sequence is RHEEEAAHSEISQQTLGQTRSLP. Over residues 1022–1033 the composition is skewed to polar residues; sequence EISQQTLGQTRS. Disordered regions lie at residues 1441–1824 and 1837–2023; these read KPKK…GSAS and LRSN…YGCV. A compositionally biased stretch (basic and acidic residues) spans 1442 to 1460; sequence PKKESSRERPDAPRERIRS. The segment covering 1478–1491 has biased composition (pro residues); sequence SAPPPPPPPLPPRQ. Polar residues-rich tracts occupy residues 1497–1518 and 1564–1585; these read DSMN…SSPA and TCST…SSSL. Low complexity-rich tracts occupy residues 1623 to 1643 and 1667 to 1704; these read SAEF…KGSL and RLSQ…SPGS. A GBA motif is present at residues 1700–1728; sequence SSPGSEMVTLEEFLQESNALSPPTVQTGS. Composition is skewed to polar residues over residues 1714 to 1727, 1752 to 1763, 1785 to 1799, and 1809 to 1824; these read QESN…VQTG, TPTNYVTPTVKT, LTDT…QTLP, and ALQQ…GSAS. The span at 1890–1904 shows a compositional bias: basic and acidic residues; it reads VDPRRLSLAQPRDEF. Residues 1927-1945 show a composition bias toward low complexity; it reads GSGSSRAGAARSGSAQPRG. Residues 1974–1988 are compositionally biased toward basic and acidic residues; the sequence is QEQREAESPLLKKAD. The segment covering 1989 to 2014 has biased composition (polar residues); the sequence is TTNLSYASKEQPTSKPASPDPNNDPQ. Residues 2020 to 2023 carry the PDZ-binding motif; it reads YGCV.

Belongs to the CCDC88 family.

The protein resides in the cytoplasm. The protein localises to the cell junction. Its function is as follows. Positive regulator of Wnt signaling, acting synergistically with dvl2. Functions upstream of ctnnb1/beta-catenin in the canonical Wnt pathway, and also activates jnk in the Wnt/planar cell polarity (PCP) pathway. Acts as a non-receptor guanine nucleotide exchange factor which binds to and activates guanine nucleotide-binding protein G(i) alpha (Gi-alpha) subunits. This promotes apical cell constriction and subsequent bending of the neural plate during neurulation via arhgef18. This chain is Protein Daple, found in Danio rerio (Zebrafish).